The primary structure comprises 876 residues: Exonuclease mut-7 homolog (876 aa).

The 3'-5' exonuclease domain occupies 517–571 (GLSLLVQQVLGTALDKTQQLSNWDRRPLCEEQVIYAAADAYCLLEVHQALCREPA). Disordered stretches follow at residues 578–607 (DLAGSRRPRHRERPGARKPPGLQKASAPAA) and 751–781 (SHQEGPRSSGDEATQSQAVQEPGPAPDAAPE).

Belongs to the mut-7 family. The cofactor is Mg(2+).

Its function is as follows. Possesses 3'-5' exoribonuclease activity. Required for 3'-end trimming of AGO1-bound miRNAs. The polypeptide is Exonuclease mut-7 homolog (EXD3) (Homo sapiens (Human)).